A 337-amino-acid polypeptide reads, in one-letter code: Glycerol-3-phosphate dehydrogenase [NAD(P)+] (337 aa).

3 residues coordinate NADPH: W11, R30, and K102. 3 residues coordinate sn-glycerol 3-phosphate: K102, G138, and S140. A142 contacts NADPH. 5 residues coordinate sn-glycerol 3-phosphate: K193, D246, S256, R257, and N258. K193 (proton acceptor) is an active-site residue. R257 contributes to the NADPH binding site. V281 and E283 together coordinate NADPH.

This sequence belongs to the NAD-dependent glycerol-3-phosphate dehydrogenase family.

The protein localises to the cytoplasm. It catalyses the reaction sn-glycerol 3-phosphate + NAD(+) = dihydroxyacetone phosphate + NADH + H(+). The enzyme catalyses sn-glycerol 3-phosphate + NADP(+) = dihydroxyacetone phosphate + NADPH + H(+). It functions in the pathway membrane lipid metabolism; glycerophospholipid metabolism. Catalyzes the reduction of the glycolytic intermediate dihydroxyacetone phosphate (DHAP) to sn-glycerol 3-phosphate (G3P), the key precursor for phospholipid synthesis. This is Glycerol-3-phosphate dehydrogenase [NAD(P)+] from Variovorax paradoxus (strain S110).